A 496-amino-acid chain; its full sequence is Cobyric acid synthase (496 aa).

Positions 258 to 427 constitute a GATase cobBQ-type domain; it reads TLTVAAIRLP…WHGLLDNDAL (170 aa). Cysteine 339 acts as the Nucleophile in catalysis. Histidine 419 is an active-site residue.

The protein belongs to the CobB/CobQ family. CobQ subfamily.

The protein operates within cofactor biosynthesis; adenosylcobalamin biosynthesis. Catalyzes amidations at positions B, D, E, and G on adenosylcobyrinic A,C-diamide. NH(2) groups are provided by glutamine, and one molecule of ATP is hydrogenolyzed for each amidation. The sequence is that of Cobyric acid synthase from Mycolicibacterium smegmatis (strain ATCC 700084 / mc(2)155) (Mycobacterium smegmatis).